The primary structure comprises 276 residues: Diaminopimelate epimerase (276 aa).

Residues Asn-13, Gln-46, and Asn-66 each contribute to the substrate site. The active-site Proton donor is Cys-75. Residues 76–77 (GN), Asn-159, Asn-192, and 210–211 (ER) each bind substrate. Catalysis depends on Cys-219, which acts as the Proton acceptor. Substrate is bound at residue 220–221 (GT).

Belongs to the diaminopimelate epimerase family. In terms of assembly, homodimer.

It localises to the cytoplasm. It catalyses the reaction (2S,6S)-2,6-diaminopimelate = meso-2,6-diaminopimelate. It participates in amino-acid biosynthesis; L-lysine biosynthesis via DAP pathway; DL-2,6-diaminopimelate from LL-2,6-diaminopimelate: step 1/1. Catalyzes the stereoinversion of LL-2,6-diaminopimelate (L,L-DAP) to meso-diaminopimelate (meso-DAP), a precursor of L-lysine and an essential component of the bacterial peptidoglycan. The protein is Diaminopimelate epimerase of Pseudomonas fluorescens.